The following is a 290-amino-acid chain: Putative tyrosine recombinase TTE1313 (290 aa).

Residues M1–F85 enclose the Core-binding (CB) domain. A Tyr recombinase domain is found at K106 to A290. Residue R239 is part of the active site. The active-site O-(3'-phospho-DNA)-tyrosine intermediate is the Y283.

It belongs to the 'phage' integrase family.

The protein localises to the cytoplasm. Functionally, site-specific tyrosine recombinase, which acts by catalyzing the cutting and rejoining of the recombining DNA molecules. This Caldanaerobacter subterraneus subsp. tengcongensis (strain DSM 15242 / JCM 11007 / NBRC 100824 / MB4) (Thermoanaerobacter tengcongensis) protein is Putative tyrosine recombinase TTE1313.